Reading from the N-terminus, the 375-residue chain is Anhydro-N-acetylmuramic acid kinase (375 aa).

12–19 (GTSLDGVD) lines the ATP pocket.

The protein belongs to the anhydro-N-acetylmuramic acid kinase family.

The enzyme catalyses 1,6-anhydro-N-acetyl-beta-muramate + ATP + H2O = N-acetyl-D-muramate 6-phosphate + ADP + H(+). It participates in amino-sugar metabolism; 1,6-anhydro-N-acetylmuramate degradation. Its pathway is cell wall biogenesis; peptidoglycan recycling. In terms of biological role, catalyzes the specific phosphorylation of 1,6-anhydro-N-acetylmuramic acid (anhMurNAc) with the simultaneous cleavage of the 1,6-anhydro ring, generating MurNAc-6-P. Is required for the utilization of anhMurNAc either imported from the medium or derived from its own cell wall murein, and thus plays a role in cell wall recycling. This Mannheimia succiniciproducens (strain KCTC 0769BP / MBEL55E) protein is Anhydro-N-acetylmuramic acid kinase.